A 90-amino-acid polypeptide reads, in one-letter code: Phosphoribosyl-ATP pyrophosphatase (90 aa).

This sequence belongs to the PRA-PH family.

Its subcellular location is the cytoplasm. The enzyme catalyses 1-(5-phospho-beta-D-ribosyl)-ATP + H2O = 1-(5-phospho-beta-D-ribosyl)-5'-AMP + diphosphate + H(+). It functions in the pathway amino-acid biosynthesis; L-histidine biosynthesis; L-histidine from 5-phospho-alpha-D-ribose 1-diphosphate: step 2/9. The chain is Phosphoribosyl-ATP pyrophosphatase (hisE) from Streptomyces coelicolor (strain ATCC BAA-471 / A3(2) / M145).